The following is a 527-amino-acid chain: Anthranilate synthase component 1 1 (527 aa).

S52 is a binding site for L-tryptophan. The interval A53–E72 is disordered. Position 298-300 (P298–M300) interacts with L-tryptophan. G333–T334 provides a ligand contact to chorismate. E360 provides a ligand contact to Mg(2+). Chorismate-binding positions include Y448, R468, G486 to G488, and G488. E501 contributes to the Mg(2+) binding site.

Belongs to the anthranilate synthase component I family. As to quaternary structure, tetramer of two components I and two components II. Mg(2+) is required as a cofactor.

It catalyses the reaction chorismate + L-glutamine = anthranilate + pyruvate + L-glutamate + H(+). It functions in the pathway amino-acid biosynthesis; L-tryptophan biosynthesis; L-tryptophan from chorismate: step 1/5. The polypeptide is Anthranilate synthase component 1 1 (trpE1) (Halobacterium salinarum (strain ATCC 700922 / JCM 11081 / NRC-1) (Halobacterium halobium)).